Reading from the N-terminus, the 432-residue chain is Trigger factor (432 aa).

One can recognise a PPIase FKBP-type domain in the interval 161 to 246 (DDRVTIDFVG…LKKIENMVLP (86 aa)).

This sequence belongs to the FKBP-type PPIase family. Tig subfamily.

The protein resides in the cytoplasm. The catalysed reaction is [protein]-peptidylproline (omega=180) = [protein]-peptidylproline (omega=0). Its function is as follows. Involved in protein export. Acts as a chaperone by maintaining the newly synthesized protein in an open conformation. Functions as a peptidyl-prolyl cis-trans isomerase. The chain is Trigger factor from Haemophilus influenzae (strain PittEE).